A 398-amino-acid chain; its full sequence is 1-deoxy-D-xylulose 5-phosphate reductoisomerase (398 aa).

NADPH-binding residues include T10, G11, S12, I13, and N124. K125 is a 1-deoxy-D-xylulose 5-phosphate binding site. An NADPH-binding site is contributed by E126. D150 serves as a coordination point for Mn(2+). 4 residues coordinate 1-deoxy-D-xylulose 5-phosphate: S151, E152, S186, and H209. E152 is a Mn(2+) binding site. An NADPH-binding site is contributed by G215. Positions 222, 227, 228, and 231 each coordinate 1-deoxy-D-xylulose 5-phosphate. Residue E231 participates in Mn(2+) binding.

It belongs to the DXR family. Mg(2+) serves as cofactor. Requires Mn(2+) as cofactor.

It carries out the reaction 2-C-methyl-D-erythritol 4-phosphate + NADP(+) = 1-deoxy-D-xylulose 5-phosphate + NADPH + H(+). It participates in isoprenoid biosynthesis; isopentenyl diphosphate biosynthesis via DXP pathway; isopentenyl diphosphate from 1-deoxy-D-xylulose 5-phosphate: step 1/6. Its function is as follows. Catalyzes the NADPH-dependent rearrangement and reduction of 1-deoxy-D-xylulose-5-phosphate (DXP) to 2-C-methyl-D-erythritol 4-phosphate (MEP). This is 1-deoxy-D-xylulose 5-phosphate reductoisomerase from Tolumonas auensis (strain DSM 9187 / NBRC 110442 / TA 4).